A 348-amino-acid polypeptide reads, in one-letter code: Major outer membrane protein P.IB (348 aa).

A signal peptide spans 1-19 (MKKSLIALTLAALPVAATA).

The protein belongs to the Gram-negative porin family. As to quaternary structure, homotrimer.

Its subcellular location is the cell outer membrane. Its function is as follows. Serves as a slightly cation selective porin. Major antigen on the gonococcal cell surface and it may have pathogenic properties in addition to its porin activity. This Neisseria gonorrhoeae protein is Major outer membrane protein P.IB (porB).